The following is a 148-amino-acid chain: Putative pre-16S rRNA nuclease (148 aa).

The protein belongs to the YqgF nuclease family.

The protein resides in the cytoplasm. Its function is as follows. Could be a nuclease involved in processing of the 5'-end of pre-16S rRNA. The sequence is that of Putative pre-16S rRNA nuclease from Chromohalobacter salexigens (strain ATCC BAA-138 / DSM 3043 / CIP 106854 / NCIMB 13768 / 1H11).